A 446-amino-acid chain; its full sequence is Adenylosuccinate synthetase (446 aa).

Residues glycine 21–lysine 27 and glycine 49–threonine 51 each bind GTP. Aspartate 22 (proton acceptor) is an active-site residue. Mg(2+) is bound by residues aspartate 22 and glycine 49. IMP-binding positions include aspartate 22–lysine 25, asparagine 47–histidine 50, threonine 141, arginine 155, glutamine 236, threonine 251, and arginine 319. The Proton donor role is filled by histidine 50. Residue valine 315–arginine 321 coordinates substrate. GTP is bound by residues arginine 321, lysine 347–aspartate 349, and serine 429–serine 431.

It belongs to the adenylosuccinate synthetase family. In terms of assembly, homodimer. It depends on Mg(2+) as a cofactor.

It is found in the cytoplasm. It catalyses the reaction IMP + L-aspartate + GTP = N(6)-(1,2-dicarboxyethyl)-AMP + GDP + phosphate + 2 H(+). Its pathway is purine metabolism; AMP biosynthesis via de novo pathway; AMP from IMP: step 1/2. Functionally, plays an important role in the de novo pathway of purine nucleotide biosynthesis. Catalyzes the first committed step in the biosynthesis of AMP from IMP. This chain is Adenylosuccinate synthetase, found in Polaromonas sp. (strain JS666 / ATCC BAA-500).